The following is an 859-amino-acid chain: Valine--tRNA ligase (859 aa).

Residues 46 to 56 carry the 'HIGH' region motif; it reads PTVSGQLHIGH. Positions 583-587 match the 'KMSKS' region motif; it reads KMSKS. Lysine 586 is a binding site for ATP.

This sequence belongs to the class-I aminoacyl-tRNA synthetase family. ValS type 2 subfamily. In terms of assembly, monomer.

It localises to the cytoplasm. The enzyme catalyses tRNA(Val) + L-valine + ATP = L-valyl-tRNA(Val) + AMP + diphosphate. Catalyzes the attachment of valine to tRNA(Val). As ValRS can inadvertently accommodate and process structurally similar amino acids such as threonine, to avoid such errors, it has a 'posttransfer' editing activity that hydrolyzes mischarged Thr-tRNA(Val) in a tRNA-dependent manner. The sequence is that of Valine--tRNA ligase from Rickettsia felis (strain ATCC VR-1525 / URRWXCal2) (Rickettsia azadi).